The primary structure comprises 152 residues: Glutamyl-tRNA(Gln) amidotransferase subunit F, mitochondrial (152 aa).

Belongs to the GatF family. As to quaternary structure, subunit of the heterotrimeric GatFAB amidotransferase (AdT) complex, composed of A, B and F subunits.

It is found in the mitochondrion inner membrane. The enzyme catalyses L-glutamyl-tRNA(Gln) + L-glutamine + ATP + H2O = L-glutaminyl-tRNA(Gln) + L-glutamate + ADP + phosphate + H(+). In terms of biological role, allows the formation of correctly charged Gln-tRNA(Gln) through the transamidation of misacylated Glu-tRNA(Gln) in the mitochondria. The reaction takes place in the presence of glutamine and ATP through an activated gamma-phospho-Glu-tRNA(Gln). Required for proper protein synthesis within the mitochondrion. The chain is Glutamyl-tRNA(Gln) amidotransferase subunit F, mitochondrial from Komagataella phaffii (strain GS115 / ATCC 20864) (Yeast).